The following is a 115-amino-acid chain: uncharacterized protein (115 aa).

The N-terminal stretch at 1–26 is a signal peptide; that stretch reads MNFKKTVVSALSISALALSVSGVASA. One can recognise a BIG2 domain in the interval 36-114; it reads VKNISISPTH…AVFGKVYVTV (79 aa).

This is an uncharacterized protein from Bacillus subtilis (strain 168).